The following is a 544-amino-acid chain: NEDD4-binding protein 3 (544 aa).

4 disordered regions span residues 61 to 84 (LPKK…ADYA), 116 to 252 (SVFK…EFSC), 335 to 365 (KELR…PEEE), and 430 to 465 (QEQA…RDSA). Ser-176 is subject to Phosphoserine. Positions 186-222 (PSLSDSSSGGSFGRSPGTGPSPFSSSLGHLNHLGGSL) are enriched in low complexity. Residues 294–530 (LAELKRLYVE…LEQELRALRE (237 aa)) are a coiled coil.

The protein belongs to the N4BP3 family. In terms of assembly, binds NEDD4. Interacts with 14-3-3 proteins. Interacts with MAVS.

It localises to the cytoplasmic vesicle. Its subcellular location is the cell projection. The protein localises to the axon. It is found in the dendrite. Functionally, plays a positive role in the antiviral innate immune signaling pathway. Mechanistically, interacts with MAVS and functions as a positive regulator to promote 'Lys-63'-linked polyubiquitination of MAVS and thus strengthens the interaction between MAVS and TRAF2. Also plays a role in axon and dendrite arborization during cranial nerve development. May also be important for neural crest migration and early development of other anterior structures including eye, brain and cranial cartilage. This Homo sapiens (Human) protein is NEDD4-binding protein 3 (N4BP3).